Reading from the N-terminus, the 104-residue chain is uncharacterized protein (104 aa).

This is an uncharacterized protein from Mycobacterium tuberculosis (strain ATCC 25618 / H37Rv).